The sequence spans 146 residues: Leghemoglobin 49 (146 aa).

The Globin domain occupies 2–146 (GFTQQQEALV…LATAIKKAMS (145 aa)). Tyrosine 24 and tyrosine 29 each carry nitrated tyrosine. Serine 44 contacts heme b. Serine 44 is modified (phosphoserine). Residue histidine 61 participates in O2 binding. Heme b contacts are provided by histidine 93 and lysine 96. Position 134 is a nitrated tyrosine (tyrosine 134).

It belongs to the plant globin family. Monomer. In terms of processing, nitrated in effective nodules and particularly in hypoxic conditions; this mechanism may play a protective role in the symbiosis by buffering toxic peroxynitrite NO(2)(-). Nitration level decrease during nodule senescence. Post-translationally, phosphorylation at Ser-44 disrupts the molecular environment of its porphyrin ring oxygen binding pocket, thus leading to a reduced oxygen consumption and to the delivery of oxygen O(2) to symbiosomes. As to expression, accumulates in root nodules after inoculation by bacteria of the genus Rhizobium.

The protein resides in the cytoplasm. Its subcellular location is the cytosol. It is found in the nucleus. Leghemoglobin that reversibly binds oxygen O(2) through a pentacoordinated heme iron. In root nodules, facilitates the diffusion of oxygen to the bacteroids while preventing the bacterial nitrogenase from being inactivated by buffering dioxygen, nitric oxide and carbon monoxide, and promoting the formation of reactive oxygen species (ROS, e.g. H(2)O(2)). This role is essential for symbiotic nitrogen fixation (SNF). The chain is Leghemoglobin 49 from Vicia faba (Broad bean).